A 150-amino-acid chain; its full sequence is Large ribosomal subunit protein uL13 (150 aa).

The segment at 127 to 150 (KGTEHPHSAQKPQPLQLNPSATAK) is disordered. The span at 136-150 (QKPQPLQLNPSATAK) shows a compositional bias: polar residues.

The protein belongs to the universal ribosomal protein uL13 family. Part of the 50S ribosomal subunit.

Functionally, this protein is one of the early assembly proteins of the 50S ribosomal subunit, although it is not seen to bind rRNA by itself. It is important during the early stages of 50S assembly. This is Large ribosomal subunit protein uL13 from Synechococcus sp. (strain CC9902).